The following is a 338-amino-acid chain: D-erythrose-4-phosphate dehydrogenase (338 aa).

R11 to I12 contributes to the NAD(+) binding site. Substrate-binding positions include S153–T155, R199, T212–K213, and R235. C154 acts as the Nucleophile in catalysis. N317 is a binding site for NAD(+).

The protein belongs to the glyceraldehyde-3-phosphate dehydrogenase family. Epd subfamily. In terms of assembly, homotetramer.

Its subcellular location is the cytoplasm. It catalyses the reaction D-erythrose 4-phosphate + NAD(+) + H2O = 4-phospho-D-erythronate + NADH + 2 H(+). It functions in the pathway cofactor biosynthesis; pyridoxine 5'-phosphate biosynthesis; pyridoxine 5'-phosphate from D-erythrose 4-phosphate: step 1/5. Functionally, catalyzes the NAD-dependent conversion of D-erythrose 4-phosphate to 4-phosphoerythronate. This Shewanella loihica (strain ATCC BAA-1088 / PV-4) protein is D-erythrose-4-phosphate dehydrogenase.